A 930-amino-acid chain; its full sequence is Translation initiation factor IF-2 (930 aa).

The span at 50–67 (FKPAAAPKVEAKPAAPKV) shows a compositional bias: low complexity. 2 disordered regions span residues 50-195 (FKPA…PRID) and 260-346 (EVVP…HELP). Basic and acidic residues-rich tracts occupy residues 68 to 90 (SAEK…EAKP) and 110 to 125 (FKAE…AERR). Positions 129 to 141 (KGNNRDQQQNGNR) are enriched in low complexity. Basic and acidic residues-rich tracts occupy residues 157-167 (RDNRRFNDQAK) and 262-295 (VPEK…DGPR). The segment covering 309 to 318 (NQKNSNWNNN) has biased composition (low complexity). Over residues 337-346 (VTERKFHELP) the composition is skewed to basic and acidic residues. The 168-residue stretch at 432–599 (ERPPVVTIMG…TVLLVAEIQE (168 aa)) folds into the tr-type G domain. A G1 region spans residues 441–448 (GHVDHGKT). Position 441–448 (441–448 (GHVDHGKT)) interacts with GTP. Residues 466 to 470 (GITQH) are G2. The segment at 487-490 (DTPG) is G3. GTP-binding positions include 487–491 (DTPGH) and 541–544 (NKID). Positions 541 to 544 (NKID) are G4. The G5 stretch occupies residues 577 to 579 (SAK).

The protein belongs to the TRAFAC class translation factor GTPase superfamily. Classic translation factor GTPase family. IF-2 subfamily.

The protein localises to the cytoplasm. Functionally, one of the essential components for the initiation of protein synthesis. Protects formylmethionyl-tRNA from spontaneous hydrolysis and promotes its binding to the 30S ribosomal subunits. Also involved in the hydrolysis of GTP during the formation of the 70S ribosomal complex. This chain is Translation initiation factor IF-2, found in Streptococcus pneumoniae (strain ATCC BAA-255 / R6).